A 485-amino-acid chain; its full sequence is NADH-quinone oxidoreductase subunit N (485 aa).

The next 14 membrane-spanning stretches (helical) occupy residues 8-28 (LIAL…MLSI), 35-55 (FLNA…LWFV), 71-91 (GFAM…CTFA), 105-125 (FYLL…ANHL), 127-147 (SLFL…GYAF), 159-179 (YTIL…LVYA), 203-223 (LLAG…LVPF), 235-255 (PAPV…GVVM), 271-291 (VVLA…ALSQ), 297-317 (LLGY…IALQ), 326-346 (VGVY…VVSL), 373-393 (AAVM…LGFI), 408-430 (WWLV…RVAV), and 455-475 (IVVL…QPLI).

This sequence belongs to the complex I subunit 2 family. As to quaternary structure, NDH-1 is composed of 13 different subunits. Subunits NuoA, H, J, K, L, M, N constitute the membrane sector of the complex.

It is found in the cell inner membrane. The enzyme catalyses a quinone + NADH + 5 H(+)(in) = a quinol + NAD(+) + 4 H(+)(out). Its function is as follows. NDH-1 shuttles electrons from NADH, via FMN and iron-sulfur (Fe-S) centers, to quinones in the respiratory chain. The immediate electron acceptor for the enzyme in this species is believed to be ubiquinone. Couples the redox reaction to proton translocation (for every two electrons transferred, four hydrogen ions are translocated across the cytoplasmic membrane), and thus conserves the redox energy in a proton gradient. This chain is NADH-quinone oxidoreductase subunit N, found in Escherichia coli O1:K1 / APEC.